Here is an 88-residue protein sequence, read N- to C-terminus: Protein ORGAN SIZE RELATED 1 (88 aa).

The interval 25–76 (ITARSVALLLFLSLLLLILPPFLPPLPPPPATLLLLPLLLMILLIFLAFSPS) is organ Size Related (OSR) domain. A run of 2 helical transmembrane segments spans residues 30 to 50 (VALL…LPPL) and 53 to 73 (PPAT…FLAF).

This sequence belongs to the plant organ size related (OSR) protein family. As to expression, mostly expressed in flowers, and, to a lower extent, in leaves and cotyledons.

Its subcellular location is the membrane. The protein localises to the endoplasmic reticulum. The protein resides in the nucleus. It localises to the cytoplasm. In terms of biological role, together with ARGOS and ARL, regulates organ growth and final organ size. Promotes both cell expansion and proliferation-dependent organ growth, in an ANT-dependent manner. This chain is Protein ORGAN SIZE RELATED 1, found in Arabidopsis thaliana (Mouse-ear cress).